Here is a 138-residue protein sequence, read N- to C-terminus: MATRTQARGAVVELLYAFESGNEEIKKIASSMLEEKKIKNNQLAFALSLFNGVLEKINEIDALIEPHLKDWDFKRLGSMEKAILRLGAYEIGFTPTQNPIIINECIELGKLYAEPNTPKFLNAILDSLSKKLTQKPLN.

This sequence belongs to the NusB family.

Functionally, involved in transcription antitermination. Required for transcription of ribosomal RNA (rRNA) genes. Binds specifically to the boxA antiterminator sequence of the ribosomal RNA (rrn) operons. The protein is Transcription antitermination protein NusB of Helicobacter pylori (strain ATCC 700392 / 26695) (Campylobacter pylori).